A 367-amino-acid chain; its full sequence is PR domain zinc finger protein 12 (367 aa).

The region spanning 86-203 is the SET domain; sequence AEVIIAQSSI…PDQELLVWYG (118 aa). C2H2-type zinc fingers lie at residues 243-265, 271-293, and 299-323; these read MRCVICHRGFNSRSNLRSHMRIH, FVCRFCNRRFSQSSTLRNHVRLH, and YKCQVCQSAYSQLAGLRAHQKSARH. Residues 318–337 are disordered; that stretch reads QKSARHRPPSTALQAHSPAL.

Belongs to the class V-like SAM-binding methyltransferase superfamily. Interacts with EHMT2. As to expression, not found in adult tissues except in dorsal root ganglia.

Its subcellular location is the nucleus. Transcriptional regulator necessary for the development of nociceptive neurons, playing a key role in determining the nociceptive lineage from neural crest cell progenitors. Initiates neurogenesis and activates downstream pro-neuronal transcription factors, such as NEUROD1, BRN3A, and ISL1, specifically within nociceptive neurons, while repressing non-nociceptor cell fates. Essential for the proper function of nociceptors in adults, influencing both their excitability and their gene expression, thereby impacting how these neurons respond to various pain stimuli. The protein is PR domain zinc finger protein 12 (PRDM12) of Homo sapiens (Human).